We begin with the raw amino-acid sequence, 670 residues long: Transcription factor Ken 2 (670 aa).

In terms of domain architecture, BTB spans 108-176 (TDLLLICDGK…LYSGQVYVRS (69 aa)). 2 disordered regions span residues 200–288 (SDGS…DRDR) and 307–470 (NNHP…SDDA). Residues 218–230 (NRNTEGITGSSVV) are compositionally biased toward polar residues. The segment covering 325-338 (HHLHHHHHHHHRQL) has biased composition (basic residues). 2 stretches are compositionally biased toward gly residues: residues 351–368 (GGGS…GESG) and 389–400 (SGGGGAGSGRRS). The span at 407–419 (EPAEDDEDYELDV) shows a compositional bias: acidic residues. Residues 451–464 (SDPVNLSIVKQQQD) show a composition bias toward polar residues. Residues 586–594 (NLKTHLRVH) form a C2H2-type 1; degenerate zinc finger. 2 C2H2-type zinc fingers span residues 600-623 (FACR…CSVH) and 636-658 (YTCC…LSGH).

It is found in the nucleus. Functionally, transcription factor required for terminalia development. Negative regulator of the JAK/STAT pathway: represses JAK/STAT-dependent expression of ventral veins lacking (vvl) in the posterior spiracles. In Culex quinquefasciatus (Southern house mosquito), this protein is Transcription factor Ken 2.